A 43-amino-acid chain; its full sequence is Kappa-actitoxin-Avd4p (43 aa).

3 disulfide bridges follow: cysteine 4–cysteine 39, cysteine 6–cysteine 32, and cysteine 22–cysteine 40.

It localises to the secreted. It is found in the nematocyst. In terms of biological role, blocks Kv3 voltage-gated potassium channels. Reduces blood pressure. The polypeptide is Kappa-actitoxin-Avd4p (Anemonia viridis (Snakelocks anemone)).